A 333-amino-acid chain; its full sequence is Glycerol-3-phosphate dehydrogenase [NAD(P)+] (333 aa).

Trp-15 and Lys-108 together coordinate NADPH. Sn-glycerol 3-phosphate is bound by residues Lys-108, Gly-136, and Ser-138. Residue Ala-140 coordinates NADPH. Lys-191, Asp-244, Ser-254, Arg-255, and Asn-256 together coordinate sn-glycerol 3-phosphate. The active-site Proton acceptor is Lys-191. Arg-255 provides a ligand contact to NADPH. 2 residues coordinate NADPH: Val-279 and Glu-281.

The protein belongs to the NAD-dependent glycerol-3-phosphate dehydrogenase family.

The protein localises to the cytoplasm. It carries out the reaction sn-glycerol 3-phosphate + NAD(+) = dihydroxyacetone phosphate + NADH + H(+). The catalysed reaction is sn-glycerol 3-phosphate + NADP(+) = dihydroxyacetone phosphate + NADPH + H(+). Its pathway is membrane lipid metabolism; glycerophospholipid metabolism. Catalyzes the reduction of the glycolytic intermediate dihydroxyacetone phosphate (DHAP) to sn-glycerol 3-phosphate (G3P), the key precursor for phospholipid synthesis. The polypeptide is Glycerol-3-phosphate dehydrogenase [NAD(P)+] (Maricaulis maris (strain MCS10) (Caulobacter maris)).